The chain runs to 267 residues: Hydroxyethylthiazole kinase (267 aa).

Met-49 contacts substrate. The ATP site is built by Arg-124 and Thr-170. Gly-197 contacts substrate.

The protein belongs to the Thz kinase family. The cofactor is Mg(2+).

It carries out the reaction 5-(2-hydroxyethyl)-4-methylthiazole + ATP = 4-methyl-5-(2-phosphooxyethyl)-thiazole + ADP + H(+). Its pathway is cofactor biosynthesis; thiamine diphosphate biosynthesis; 4-methyl-5-(2-phosphoethyl)-thiazole from 5-(2-hydroxyethyl)-4-methylthiazole: step 1/1. In terms of biological role, catalyzes the phosphorylation of the hydroxyl group of 4-methyl-5-beta-hydroxyethylthiazole (THZ). The chain is Hydroxyethylthiazole kinase from Tolumonas auensis (strain DSM 9187 / NBRC 110442 / TA 4).